Consider the following 489-residue polypeptide: Betaine aldehyde dehydrogenase (489 aa).

A K(+)-binding site is contributed by Asn-93. Position 150-152 (150-152) interacts with NAD(+); that stretch reads GAW. The active-site Charge relay system is the Lys-162. 176 to 179 contacts NAD(+); it reads KPSE. Val-180 contacts K(+). 229 to 232 lines the NAD(+) pocket; the sequence is EVGT. K(+) is bound at residue Leu-245. Catalysis depends on Glu-251, which acts as the Proton acceptor. Residues Gly-253, Cys-285, and Glu-386 each coordinate NAD(+). The active-site Nucleophile is Cys-285. Cys-285 is subject to Cysteine sulfenic acid (-SOH). K(+) is bound by residues Lys-456 and Gly-459. Glu-463 (charge relay system) is an active-site residue.

Belongs to the aldehyde dehydrogenase family. Dimer of dimers. It depends on K(+) as a cofactor.

It catalyses the reaction betaine aldehyde + NAD(+) + H2O = glycine betaine + NADH + 2 H(+). It functions in the pathway amine and polyamine biosynthesis; betaine biosynthesis via choline pathway; betaine from betaine aldehyde: step 1/1. Involved in the biosynthesis of the osmoprotectant glycine betaine. Catalyzes the irreversible oxidation of betaine aldehyde to the corresponding acid. The polypeptide is Betaine aldehyde dehydrogenase (Chromohalobacter salexigens (strain ATCC BAA-138 / DSM 3043 / CIP 106854 / NCIMB 13768 / 1H11)).